A 219-amino-acid polypeptide reads, in one-letter code: Mucosal pentraxin (219 aa).

Residues 1-19 form the signal peptide; the sequence is MEKLIVGTLLLTVLSGGIS. Residues 24 to 219 form the Pentraxin (PTX) domain; that stretch reads DGKAFIFPQE…YVVTKPKLWT (196 aa). C55 and C114 are disulfide-bonded. Positions 77, 78, 155, 156, 157, and 167 each coordinate Ca(2+).

Belongs to the pentraxin family. As to quaternary structure, homopentamer. Pentraxin (or pentaxin) have a discoid arrangement of 5 non-covalently bound subunits. Ca(2+) serves as cofactor. In terms of tissue distribution, expression is restricted to small intestine, stomach and colon. Within colon, expressed in epithelial cells located within the lower to mid region of transverse and distal crypts, but not in proximal colon.

It is found in the secreted. The protein is Mucosal pentraxin (Mptx1) of Rattus norvegicus (Rat).